Consider the following 298-residue polypeptide: Bifunctional protein FolD (298 aa).

NADP(+) is bound by residues 165–167, Ser194, and Ile235; that span reads GRG.

The protein belongs to the tetrahydrofolate dehydrogenase/cyclohydrolase family. In terms of assembly, homodimer.

The enzyme catalyses (6R)-5,10-methylene-5,6,7,8-tetrahydrofolate + NADP(+) = (6R)-5,10-methenyltetrahydrofolate + NADPH. It catalyses the reaction (6R)-5,10-methenyltetrahydrofolate + H2O = (6R)-10-formyltetrahydrofolate + H(+). Its pathway is one-carbon metabolism; tetrahydrofolate interconversion. Its function is as follows. Catalyzes the oxidation of 5,10-methylenetetrahydrofolate to 5,10-methenyltetrahydrofolate and then the hydrolysis of 5,10-methenyltetrahydrofolate to 10-formyltetrahydrofolate. This Amoebophilus asiaticus (strain 5a2) protein is Bifunctional protein FolD.